Reading from the N-terminus, the 357-residue chain is DNA replication and repair protein RecF (357 aa).

Position 31–38 (31–38) interacts with ATP; sequence GQNGAGKT.

This sequence belongs to the RecF family.

It localises to the cytoplasm. In terms of biological role, the RecF protein is involved in DNA metabolism; it is required for DNA replication and normal SOS inducibility. RecF binds preferentially to single-stranded, linear DNA. It also seems to bind ATP. The chain is DNA replication and repair protein RecF from Coxiella burnetii (strain Dugway 5J108-111).